The sequence spans 240 residues: UDP-2,3-diacylglucosamine hydrolase (240 aa).

Asp8, His10, Asp41, Asn79, and His114 together coordinate Mn(2+). Substrate is bound at residue 79-80; that stretch reads NR. Asp122, Ser160, Asn164, Lys167, and His195 together coordinate substrate. Residues His195 and His197 each coordinate Mn(2+).

It belongs to the LpxH family. The cofactor is Mn(2+).

The protein resides in the cell inner membrane. It catalyses the reaction UDP-2-N,3-O-bis[(3R)-3-hydroxytetradecanoyl]-alpha-D-glucosamine + H2O = 2-N,3-O-bis[(3R)-3-hydroxytetradecanoyl]-alpha-D-glucosaminyl 1-phosphate + UMP + 2 H(+). It functions in the pathway glycolipid biosynthesis; lipid IV(A) biosynthesis; lipid IV(A) from (3R)-3-hydroxytetradecanoyl-[acyl-carrier-protein] and UDP-N-acetyl-alpha-D-glucosamine: step 4/6. Hydrolyzes the pyrophosphate bond of UDP-2,3-diacylglucosamine to yield 2,3-diacylglucosamine 1-phosphate (lipid X) and UMP by catalyzing the attack of water at the alpha-P atom. Involved in the biosynthesis of lipid A, a phosphorylated glycolipid that anchors the lipopolysaccharide to the outer membrane of the cell. The chain is UDP-2,3-diacylglucosamine hydrolase from Salmonella agona (strain SL483).